A 241-amino-acid polypeptide reads, in one-letter code: Chaperone protein HifB (241 aa).

Residues 1–27 form the signal peptide; it reads MGKTMFKKTLLFFTALFFTALCAFSAN.

This sequence belongs to the periplasmic pilus chaperone family.

The protein localises to the periplasm. In terms of biological role, mediates assembly of pili by forming soluble multimeric complexes with pili subunits as an intermediate step in the assembly process. This protein is involved in type B pili (HifA) assembly. The protein is Chaperone protein HifB (hifB) of Haemophilus influenzae.